The sequence spans 214 residues: MRIILLGAPGAGKGTQAQFIMEKYGIPQISTGDMLRAAVKAGTELGKQAKEIMDAGKLVTDELVIALVKERIAQDDCRNGFLLDGFPRTIPQADAMKDVGINVDYVIEFAVPDELIIDRIVGRRVHAASGRVYHVKFNPPKVEGKDDVTGEDLTIRKDDHEDTVRKRLVEYHQQTAPLVSYYQKEADAGNTRYFKVEGTRKVEEVRAELETILG.

10 to 15 (GAGKGT) contributes to the ATP binding site. Residues 30–59 (STGDMLRAAVKAGTELGKQAKEIMDAGKLV) are NMP. Residues Thr31, Arg36, 57-59 (KLV), 85-88 (GFPR), and Gln92 each bind AMP. The interval 122-159 (GRRVHAASGRVYHVKFNPPKVEGKDDVTGEDLTIRKDD) is LID. ATP-binding positions include Arg123 and 132–133 (VY). The AMP site is built by Arg156 and Arg167. Arg200 lines the ATP pocket.

The protein belongs to the adenylate kinase family. Monomer.

It is found in the cytoplasm. It carries out the reaction AMP + ATP = 2 ADP. The protein operates within purine metabolism; AMP biosynthesis via salvage pathway; AMP from ADP: step 1/1. Functionally, catalyzes the reversible transfer of the terminal phosphate group between ATP and AMP. Plays an important role in cellular energy homeostasis and in adenine nucleotide metabolism. In Pectobacterium carotovorum subsp. carotovorum (strain PC1), this protein is Adenylate kinase.